Consider the following 141-residue polypeptide: Large ribosomal subunit protein uL11 (141 aa).

The protein belongs to the universal ribosomal protein uL11 family. Part of the ribosomal stalk of the 50S ribosomal subunit. Interacts with L10 and the large rRNA to form the base of the stalk. L10 forms an elongated spine to which L12 dimers bind in a sequential fashion forming a multimeric L10(L12)X complex. One or more lysine residues are methylated.

Forms part of the ribosomal stalk which helps the ribosome interact with GTP-bound translation factors. The protein is Large ribosomal subunit protein uL11 of Syntrophus aciditrophicus (strain SB).